Here is a 118-residue protein sequence, read N- to C-terminus: Vesicle-associated membrane protein 1 (118 aa).

The span at 1–15 shows a compositional bias: low complexity; it reads MSAPAQPPTEGAEGA. Residues 1-36 are disordered; the sequence is MSAPAQPPTEGAEGAAPGGGPPGPPPNMTSNRRLQQ. Residues 1-96 are Cytoplasmic-facing; sequence MSAPAQPPTE…KRKYWWKNCK (96 aa). The 61-residue stretch at 33–93 folds into the v-SNARE coiled-coil homology domain; the sequence is RLQQTQAQVE…AKLKRKYWWK (61 aa). The residue at position 63 (Ser63) is a Phosphoserine. A helical; Anchor for type IV membrane protein transmembrane segment spans residues 97-116; it reads MMIMLGAICAIIVVVIVIYF. Residues 117–118 are Vesicular-facing; the sequence is FA.

Belongs to the synaptobrevin family. As to quaternary structure, interacts with VAPA and VAPB.

It localises to the cytoplasmic vesicle. It is found in the secretory vesicle. Its subcellular location is the synaptic vesicle membrane. The protein localises to the synapse. The protein resides in the synaptosome. It localises to the cytoplasmic vesicle membrane. Involved in the targeting and/or fusion of transport vesicles to their target membrane. This is Vesicle-associated membrane protein 1 (VAMP1) from Bos taurus (Bovine).